The chain runs to 139 residues: Probable disulfide formation protein C (139 aa).

Residues 8-27 (EYALLTAWGASFIATLGSLY) form a helical membrane-spanning segment. A disulfide bridge links Cys-37 with Cys-40. 2 helical membrane-spanning segments follow: residues 42–61 (YQRI…VAKK) and 68–85 (YSLP…YHYA). Cys-99 and Cys-104 are oxidised to a cystine. A helical transmembrane segment spans residues 113 to 135 (GFVTIPFLALIGFITIAVCSFIV).

Belongs to the DsbB family. BdbC subfamily.

The protein resides in the cell membrane. Functionally, required for disulfide bond formation in some proteins. The sequence is that of Probable disulfide formation protein C from Bacillus cereus (strain ATCC 14579 / DSM 31 / CCUG 7414 / JCM 2152 / NBRC 15305 / NCIMB 9373 / NCTC 2599 / NRRL B-3711).